The chain runs to 226 residues: Probable transaldolase (226 aa).

Lys91 functions as the Schiff-base intermediate with substrate in the catalytic mechanism.

This sequence belongs to the transaldolase family. Type 3B subfamily.

It is found in the cytoplasm. It catalyses the reaction D-sedoheptulose 7-phosphate + D-glyceraldehyde 3-phosphate = D-erythrose 4-phosphate + beta-D-fructose 6-phosphate. Its pathway is carbohydrate degradation; pentose phosphate pathway; D-glyceraldehyde 3-phosphate and beta-D-fructose 6-phosphate from D-ribose 5-phosphate and D-xylulose 5-phosphate (non-oxidative stage): step 2/3. Its function is as follows. Transaldolase is important for the balance of metabolites in the pentose-phosphate pathway. This is Probable transaldolase from Chlorobium phaeobacteroides (strain DSM 266 / SMG 266 / 2430).